Here is a 463-residue protein sequence, read N- to C-terminus: Cysteine--tRNA ligase (463 aa).

Cys-29 is a binding site for Zn(2+). The short motif at 31 to 41 (ATPQTQPHIGH) is the 'HIGH' region element. Cys-212, His-237, and Glu-241 together coordinate Zn(2+). A 'KMSKS' region motif is present at residues 268 to 272 (KMSKS). ATP is bound at residue Lys-271.

It belongs to the class-I aminoacyl-tRNA synthetase family. As to quaternary structure, monomer. It depends on Zn(2+) as a cofactor.

It localises to the cytoplasm. The catalysed reaction is tRNA(Cys) + L-cysteine + ATP = L-cysteinyl-tRNA(Cys) + AMP + diphosphate. This is Cysteine--tRNA ligase from Corynebacterium diphtheriae (strain ATCC 700971 / NCTC 13129 / Biotype gravis).